The sequence spans 119 residues: Large ribosomal subunit protein bL20 (119 aa).

This sequence belongs to the bacterial ribosomal protein bL20 family.

In terms of biological role, binds directly to 23S ribosomal RNA and is necessary for the in vitro assembly process of the 50S ribosomal subunit. It is not involved in the protein synthesizing functions of that subunit. In Bordetella bronchiseptica (strain ATCC BAA-588 / NCTC 13252 / RB50) (Alcaligenes bronchisepticus), this protein is Large ribosomal subunit protein bL20.